A 90-amino-acid chain; its full sequence is Guanine nucleotide-binding protein subunit gamma (90 aa).

A lipid anchor (S-palmitoyl cysteine) is attached at cysteine 86. Position 87 is a cysteine methyl ester (cysteine 87). Cysteine 87 carries S-farnesyl cysteine lipidation. A propeptide spans 88–90 (CIM) (removed in mature form).

It belongs to the G protein gamma family. As to quaternary structure, g proteins are composed of 3 units, alpha, beta and gamma.

It is found in the membrane. This is Guanine nucleotide-binding protein subunit gamma from Eremothecium gossypii (strain ATCC 10895 / CBS 109.51 / FGSC 9923 / NRRL Y-1056) (Yeast).